The chain runs to 94 residues: uncharacterized protein (94 aa).

A compositionally biased stretch (polar residues) spans 33-42 (INSLPTFTKP). A disordered region spans residues 33–57 (INSLPTFTKPNDSNNNVNKSSNDGV). Residues 43–57 (NDSNNNVNKSSNDGV) are compositionally biased toward low complexity.

This is an uncharacterized protein from Dictyostelium discoideum (Social amoeba).